Consider the following 204-residue polypeptide: MKVKICGITDMETAKRACEYGADALGFVFAESKRKITPGLAKEIIQELPANVLKIGVFVNESVEVIQKITENCGLTHVQLHGDEDNHQIRRLNIPSIKALGVTSEIDMKNAQAYKTDYILFDSPKERFHGGNGKKFSWELLAHMSKELREKTILAGGLNALNIEEAIRTVRPYMVDVSSGVETEGKKDVEKIKQFIIKAKECSK.

It belongs to the TrpF family.

It carries out the reaction N-(5-phospho-beta-D-ribosyl)anthranilate = 1-(2-carboxyphenylamino)-1-deoxy-D-ribulose 5-phosphate. The protein operates within amino-acid biosynthesis; L-tryptophan biosynthesis; L-tryptophan from chorismate: step 3/5. The polypeptide is N-(5'-phosphoribosyl)anthranilate isomerase (Bacillus cereus (strain Q1)).